We begin with the raw amino-acid sequence, 281 residues long: Oxidoreductase-like protein SRL4 (281 aa).

NADP(+) contacts are provided by Leu-39, Thr-60, Lys-67, Lys-152, and Lys-197. The active-site Lowers pKa of active site Tyr is Lys-197.

Belongs to the short-chain dehydrogenases/reductases (SDR) family.

May be involved in the regulation of dNTP production. Induces the SOS system when expressed in E.coli, therefore, it may play a role in DNA metabolism and/or in genome stability. The sequence is that of Oxidoreductase-like protein SRL4 (SRL4) from Saccharomyces cerevisiae (strain ATCC 204508 / S288c) (Baker's yeast).